The primary structure comprises 183 residues: NAD(P)H-quinone oxidoreductase subunit I, chloroplastic (183 aa).

4Fe-4S ferredoxin-type domains lie at 55–84 (GRIHFEFDKCIACEVCVRVCPINLPVVDWE) and 95–124 (KNYSIDFGVCIFCGNCVEYCPTNCLSMTEE). Residues Cys64, Cys67, Cys70, Cys74, Cys104, Cys107, Cys110, and Cys114 each contribute to the [4Fe-4S] cluster site.

This sequence belongs to the complex I 23 kDa subunit family. NDH is composed of at least 16 different subunits, 5 of which are encoded in the nucleus. [4Fe-4S] cluster serves as cofactor.

The protein localises to the plastid. It is found in the chloroplast thylakoid membrane. It catalyses the reaction a plastoquinone + NADH + (n+1) H(+)(in) = a plastoquinol + NAD(+) + n H(+)(out). The catalysed reaction is a plastoquinone + NADPH + (n+1) H(+)(in) = a plastoquinol + NADP(+) + n H(+)(out). NDH shuttles electrons from NAD(P)H:plastoquinone, via FMN and iron-sulfur (Fe-S) centers, to quinones in the photosynthetic chain and possibly in a chloroplast respiratory chain. The immediate electron acceptor for the enzyme in this species is believed to be plastoquinone. Couples the redox reaction to proton translocation, and thus conserves the redox energy in a proton gradient. This Marchantia polymorpha (Common liverwort) protein is NAD(P)H-quinone oxidoreductase subunit I, chloroplastic.